Here is a 239-residue protein sequence, read N- to C-terminus: Prolyl hydroxylase EGLN3 (239 aa).

The tract at residues A62–L73 is beta(2)beta(3) 'finger-like' loop. The tract at residues C88–Y104 is required for interaction with ADRB2. A Fe2OG dioxygenase domain is found at E116–D214. H135, D137, and H196 together coordinate Fe cation. R205 is a binding site for 2-oxoglutarate.

Interacts with ADRB2; the interaction hydroxylates ADRB2 facilitating its ubiquitination by the VHL-E3 ligase complex. Interacts with PAX2; the interaction targets PAX2 for destruction. Interacts with PKM; the interaction hydroxylates PKM in hypoxia. Interacts with WDR83; the interaction leads to almost complete elimination of HIF-mediated reporter activity. Interacts with BCL2 (via its BH4 domain); the interaction disrupts the BAX-BCL4 complex inhibiting the anti-apoptotic activity of BCL2. Fe(2+) serves as cofactor. Requires L-ascorbate as cofactor. Ubiquitinated by SIAH1 and/or SIAH2 in response to the unfolded protein response (UPR), leading to its degradation. As to expression, highly expressed in vascular smooth muscle. Moderately expressed in esophagus, stomach, small bowel and aorta. Low levels in tail and kidney. Expression also in pheochromocytoma cell line PC-12.

The protein localises to the nucleus. It localises to the cytoplasm. It catalyses the reaction L-prolyl-[protein] + 2-oxoglutarate + O2 = trans-4-hydroxy-L-prolyl-[protein] + succinate + CO2. The catalysed reaction is L-prolyl-[hypoxia-inducible factor alpha subunit] + 2-oxoglutarate + O2 = trans-4-hydroxy-L-prolyl-[hypoxia-inducible factor alpha subunit] + succinate + CO2. In terms of biological role, prolyl hydroxylase that mediates hydroxylation of proline residues in target proteins, such as PKM, TELO2, ATF4 and HIF1A. Target proteins are preferentially recognized via a LXXLAP motif. Cellular oxygen sensor that catalyzes, under normoxic conditions, the post-translational formation of 4-hydroxyproline in hypoxia-inducible factor (HIF) alpha proteins. Hydroxylates a specific proline found in each of the oxygen-dependent degradation (ODD) domains (N-terminal, NODD, and C-terminal, CODD) of HIF1A. Also hydroxylates HIF2A. Has a preference for the CODD site for both HIF1A and HIF2A. Hydroxylation on the NODD site by EGLN3 appears to require prior hydroxylation on the CODD site. Hydroxylated HIFs are then targeted for proteasomal degradation via the von Hippel-Lindau ubiquitination complex. Under hypoxic conditions, the hydroxylation reaction is attenuated allowing HIFs to escape degradation resulting in their translocation to the nucleus, heterodimerization with HIF1B, and increased expression of hypoxy-inducible genes. ELGN3 is the most important isozyme in limiting physiological activation of HIFs (particularly HIF2A) in hypoxia. Also hydroxylates PKM in hypoxia, limiting glycolysis. Under normoxia, hydroxylates and regulates the stability of ADRB2. Regulator of cardiomyocyte and neuronal apoptosis. In cardiomyocytes, inhibits the anti-apoptotic effect of BCL2 by disrupting the BAX-BCL2 complex. In neurons, has a NGF-induced proapoptotic effect, probably through regulating CASP3 activity. Also essential for hypoxic regulation of neutrophilic inflammation. Plays a crucial role in DNA damage response (DDR) by hydroxylating TELO2, promoting its interaction with ATR which is required for activation of the ATR/CHK1/p53 pathway. Also mediates hydroxylation of ATF4, leading to decreased protein stability of ATF4. The polypeptide is Prolyl hydroxylase EGLN3 (Egln3) (Rattus norvegicus (Rat)).